Consider the following 323-residue polypeptide: Thymidylate synthase (323 aa).

DUMP is bound by residues Arg21 and 172–173 (RR). Catalysis depends on Cys192, which acts as the Nucleophile. Residues 214-217 (RSND), Asn225, and 255-257 (HVY) each bind dUMP. Residue Asp217 participates in (6R)-5,10-methylene-5,6,7,8-tetrahydrofolate binding. Position 322 (Ala322) interacts with (6R)-5,10-methylene-5,6,7,8-tetrahydrofolate.

It belongs to the thymidylate synthase family. Bacterial-type ThyA subfamily. In terms of assembly, homodimer.

Its subcellular location is the cytoplasm. It carries out the reaction dUMP + (6R)-5,10-methylene-5,6,7,8-tetrahydrofolate = 7,8-dihydrofolate + dTMP. Its pathway is pyrimidine metabolism; dTTP biosynthesis. Functionally, catalyzes the reductive methylation of 2'-deoxyuridine-5'-monophosphate (dUMP) to 2'-deoxythymidine-5'-monophosphate (dTMP) while utilizing 5,10-methylenetetrahydrofolate (mTHF) as the methyl donor and reductant in the reaction, yielding dihydrofolate (DHF) as a by-product. This enzymatic reaction provides an intracellular de novo source of dTMP, an essential precursor for DNA biosynthesis. In Bordetella parapertussis (strain 12822 / ATCC BAA-587 / NCTC 13253), this protein is Thymidylate synthase.